The primary structure comprises 215 residues: 7-methyl-GTP pyrophosphatase (215 aa).

Asp-79 serves as the catalytic Proton acceptor.

The protein belongs to the Maf family. YceF subfamily. The cofactor is a divalent metal cation.

It localises to the cytoplasm. The catalysed reaction is N(7)-methyl-GTP + H2O = N(7)-methyl-GMP + diphosphate + H(+). Its function is as follows. Nucleoside triphosphate pyrophosphatase that hydrolyzes 7-methyl-GTP (m(7)GTP). May have a dual role in cell division arrest and in preventing the incorporation of modified nucleotides into cellular nucleic acids. In Burkholderia thailandensis (strain ATCC 700388 / DSM 13276 / CCUG 48851 / CIP 106301 / E264), this protein is 7-methyl-GTP pyrophosphatase.